Reading from the N-terminus, the 505-residue chain is Salutaridine synthase (505 aa).

Residues 10 to 30 traverse the membrane as a helical segment; that stretch reads DFWMIACTVIIVFALVKFMFS. C444 is a binding site for heme.

Belongs to the cytochrome P450 family. Heme serves as cofactor.

It localises to the endoplasmic reticulum membrane. The enzyme catalyses (R)-reticuline + reduced [NADPH--hemoprotein reductase] + O2 = salutaridine + oxidized [NADPH--hemoprotein reductase] + 2 H2O + H(+). In terms of biological role, cytochrome P450 monooxygenase involved in biosynthesis of morphinan-type benzylisoquinoline and opiate alkaloids natural products. Catalyzes the formation of the morphinan alkaloid salutaridine by intramolecular phenol oxidation of (R)-reticuline without the incorporation of oxygen into the product. Can also use (R)-norreticuline as substrate. This is Salutaridine synthase from Papaver somniferum (Opium poppy).